We begin with the raw amino-acid sequence, 813 residues long: G-type lectin S-receptor-like serine/threonine-protein kinase LECRK1 (813 aa).

The first 19 residues, 1–19 (MVALLLFPMLLQLLSPTCA), serve as a signal peptide directing secretion. Topologically, residues 20–466 (QTQKNITLGS…NRKHWVLGSS (447 aa)) are extracellular. Residues 22-149 (QKNITLGSTL…DGTTKWQTFD (128 aa)) form the Bulb-type lectin domain. 6 N-linked (GlcNAc...) asparagine glycosylation sites follow: Asn24, Asn57, Asn164, Asn168, Asn219, and Asn242. The EGF-like; atypical domain maps to 293-346 (PQNICHAIVSDVGSGVCGFNSYCTFDGTRNQIASCQCPPWYKFFDEQKKYKGCK). 5 disulfide bridges follow: Cys297/Cys315, Cys309/Cys327, Cys329/Cys345, Cys391/Cys413, and Cys395/Cys401. The 80-residue stretch at 354–433 (CDLDEATALA…NMADYVQRTV (80 aa)) folds into the PAN domain. Residues Asn407 and Asn441 are each glycosylated (N-linked (GlcNAc...) asparagine). The chain crosses the membrane as a helical span at residues 467 to 487 (LILGTSILVNFALISIFLFGT). The Cytoplasmic segment spans residues 488-813 (YCRIATKKNI…DPCSFISSLP (326 aa)). Residues 523–797 (AGFHEILGAG…KVTQMLDGAV (275 aa)) form the Protein kinase domain. Residues 529 to 537 (LGAGASGVV) and Lys553 contribute to the ATP site. Asp647 (proton acceptor) is an active-site residue.

This sequence belongs to the protein kinase superfamily. Ser/Thr protein kinase family.

Its subcellular location is the membrane. The catalysed reaction is L-seryl-[protein] + ATP = O-phospho-L-seryl-[protein] + ADP + H(+). The enzyme catalyses L-threonyl-[protein] + ATP = O-phospho-L-threonyl-[protein] + ADP + H(+). In terms of biological role, involved in innate immunity. Required for the expression of defense-related genes PR1A, LOX2 and CHS1 upon biotic stresses. Required for basal resistance to the fungal blast (M.grisea), bacterial blight (X.oryzae pv. oryzae, Xoo) and the herbivorous insect brown planthopper (N.lugens, BPH). May be involved in several defense signaling pathways. Involved in the promotion of seed germination. Required for the expression of alpha-amylase genes during seed germination. Involved in resistance against the herbivorous insect brown planthopper (N.lugens, BPH). Member of the BPH3 (BPH resistance locus 3) cluster which contains LECRK1, LECRK2 and LECRK3. This is G-type lectin S-receptor-like serine/threonine-protein kinase LECRK1 from Oryza sativa subsp. japonica (Rice).